The sequence spans 186 residues: Signal peptidase complex catalytic subunit SEC11 (186 aa).

The Cytoplasmic portion of the chain corresponds to 1–20; that stretch reads MDALGLSKLRHLKPRQLLSQ. Residues 21–41 form a helical; Signal-anchor for type II membrane protein membrane-spanning segment; that stretch reads VLNFALILSTAFMLWKGLSVA. Over 42 to 186 the chain is Lumenal; sequence TDSPSPIVVV…MGLLVIVQRE (145 aa). Catalysis depends on charge relay system residues Ser55, His102, and Asp128. A C-terminal short (CTS) helix region spans residues 172–183; the sequence is ALLGIMGLLVIV.

Belongs to the peptidase S26B family. As to quaternary structure, component of the signal peptidase complex (SPC) composed of a catalytic subunit SEC11 and three accessory subunits SPC1, SPC2 and SPC3. The complex induces a local thinning of the ER membrane which is used to measure the length of the signal peptide (SP) h-region of protein substrates. This ensures the selectivity of the complex towards h-regions shorter than 18-20 amino acids. SPC associates with the translocon complex.

It localises to the endoplasmic reticulum membrane. The enzyme catalyses Cleavage of hydrophobic, N-terminal signal or leader sequences from secreted and periplasmic proteins.. Catalytic component of the signal peptidase complex (SPC) which catalyzes the cleavage of N-terminal signal sequences from nascent proteins as they are translocated into the lumen of the endoplasmic reticulum. Specifically cleaves N-terminal signal peptides that contain a hydrophobic alpha-helix (h-region) shorter than 18-20 amino acids. In Tuber melanosporum (strain Mel28) (Perigord black truffle), this protein is Signal peptidase complex catalytic subunit SEC11 (SEC11).